The sequence spans 728 residues: Magnetosome formation protease MamE (728 aa).

The Cytoplasmic segment spans residues 1–21 (MAMFNGDVEDGGRGDASCGKD). A helical transmembrane segment spans residues 22–42 (LKRYLMLMGVVALVVLFGAFI). The Lumenal portion of the chain corresponds to 43 to 728 (YRQSSGGLRL…RNGQEFWIVL (686 aa)). Active-site charge relay system residues include histidine 188, aspartate 221, and serine 297. The MCR (magnetochrome) 1 motif lies at 375-398 (IFAGTRAPHTDGRQNMDCTTCHDL). The heme site is built by cysteine 392, cysteine 395, histidine 396, cysteine 438, cysteine 441, and histidine 442. Positions 421 to 444 (IPMGAVSPHTDGRQNMNCANCHQM) match the MCR 2 motif. 2 consecutive PDZ domains span residues 471–573 (AINI…LRDG) and 622–721 (PAVM…NRNG).

In the N-terminal section; belongs to the peptidase S1C family. In terms of assembly, might interact with MamB via PDZ1. It depends on heme as a cofactor. Subject to autocatalytic cleavage; cleavage also requires MamO.

It is found in the magnetosome membrane. Its activity is regulated as follows. Autoproteolysis is stimulated by exogenous substrates or peptides that bind to its PDZ domains; may be stimulated by an environmental cue in vivo. Protease activity is tightly regulated; increasing its activity decreases substrate levels and disturbs biomineralization. In terms of biological role, acts at 2 distinct steps of magnetosome formation; required for correct localization of proteins to the magnetosome while the protease activity is required for maturation of small magnetite crystals into larger, functional ones. The 2 functions are separable by mutation. Probably cleaves at least itself, MamO and MamP; cleavage requires the putative transport domain of MamO. Involved in localization of some proteins (at least MamA, MamC, MamF, MamI and MamJ) to the magnetosome. In Paramagnetospirillum magneticum (strain ATCC 700264 / AMB-1) (Magnetospirillum magneticum), this protein is Magnetosome formation protease MamE (mamE).